The following is a 315-amino-acid chain: Acetyl-coenzyme A carboxylase carboxyl transferase subunit alpha (315 aa).

One can recognise a CoA carboxyltransferase C-terminal domain in the interval 32–293; the sequence is NISDEIARLQ…RADLVQQLDM (262 aa).

Belongs to the AccA family. As to quaternary structure, acetyl-CoA carboxylase is a heterohexamer composed of biotin carboxyl carrier protein (AccB), biotin carboxylase (AccC) and two subunits each of ACCase subunit alpha (AccA) and ACCase subunit beta (AccD).

Its subcellular location is the cytoplasm. It catalyses the reaction N(6)-carboxybiotinyl-L-lysyl-[protein] + acetyl-CoA = N(6)-biotinyl-L-lysyl-[protein] + malonyl-CoA. Its pathway is lipid metabolism; malonyl-CoA biosynthesis; malonyl-CoA from acetyl-CoA: step 1/1. Functionally, component of the acetyl coenzyme A carboxylase (ACC) complex. First, biotin carboxylase catalyzes the carboxylation of biotin on its carrier protein (BCCP) and then the CO(2) group is transferred by the carboxyltransferase to acetyl-CoA to form malonyl-CoA. The chain is Acetyl-coenzyme A carboxylase carboxyl transferase subunit alpha from Pseudomonas putida (strain ATCC 47054 / DSM 6125 / CFBP 8728 / NCIMB 11950 / KT2440).